We begin with the raw amino-acid sequence, 313 residues long: Probable GTP 3',8-cyclase (313 aa).

The region spanning Val-4–Arg-224 is the Radical SAM core domain. Arg-13 is a GTP binding site. The [4Fe-4S] cluster site is built by Cys-20, Cys-24, and Cys-27. Lys-60 provides a ligand contact to GTP. Residue Gly-64 coordinates S-adenosyl-L-methionine. Thr-90 contacts GTP. An S-adenosyl-L-methionine-binding site is contributed by Ser-114. Lys-151 is a binding site for GTP. [4Fe-4S] cluster-binding residues include Cys-244 and Cys-247. Residue Arg-249 to Arg-251 coordinates GTP. Cys-261 lines the [4Fe-4S] cluster pocket.

The protein belongs to the radical SAM superfamily. MoaA family. The cofactor is [4Fe-4S] cluster.

It catalyses the reaction GTP + AH2 + S-adenosyl-L-methionine = (8S)-3',8-cyclo-7,8-dihydroguanosine 5'-triphosphate + 5'-deoxyadenosine + L-methionine + A + H(+). Its pathway is cofactor biosynthesis; molybdopterin biosynthesis. Its function is as follows. Catalyzes the cyclization of GTP to (8S)-3',8-cyclo-7,8-dihydroguanosine 5'-triphosphate. The chain is Probable GTP 3',8-cyclase from Sulfolobus acidocaldarius (strain ATCC 33909 / DSM 639 / JCM 8929 / NBRC 15157 / NCIMB 11770).